A 561-amino-acid chain; its full sequence is DNA ligase B (561 aa).

Lys-124 (N6-AMP-lysine intermediate) is an active-site residue.

The protein belongs to the NAD-dependent DNA ligase family. LigB subfamily.

It catalyses the reaction NAD(+) + (deoxyribonucleotide)n-3'-hydroxyl + 5'-phospho-(deoxyribonucleotide)m = (deoxyribonucleotide)n+m + AMP + beta-nicotinamide D-nucleotide.. Its function is as follows. Catalyzes the formation of phosphodiester linkages between 5'-phosphoryl and 3'-hydroxyl groups in double-stranded DNA using NAD as a coenzyme and as the energy source for the reaction. This Cronobacter sakazakii (strain ATCC BAA-894) (Enterobacter sakazakii) protein is DNA ligase B.